Consider the following 325-residue polypeptide: 5-dehydro-2-deoxygluconokinase (325 aa).

Belongs to the carbohydrate kinase PfkB family.

The enzyme catalyses 5-dehydro-2-deoxy-D-gluconate + ATP = 6-phospho-5-dehydro-2-deoxy-D-gluconate + ADP + H(+). The protein operates within polyol metabolism; myo-inositol degradation into acetyl-CoA; acetyl-CoA from myo-inositol: step 5/7. Its function is as follows. Catalyzes the phosphorylation of 5-dehydro-2-deoxy-D-gluconate (2-deoxy-5-keto-D-gluconate or DKG) to 6-phospho-5-dehydro-2-deoxy-D-gluconate (DKGP). The sequence is that of 5-dehydro-2-deoxygluconokinase from Bacillus licheniformis (strain ATCC 14580 / DSM 13 / JCM 2505 / CCUG 7422 / NBRC 12200 / NCIMB 9375 / NCTC 10341 / NRRL NRS-1264 / Gibson 46).